Consider the following 512-residue polypeptide: Maturase K (512 aa).

The protein belongs to the intron maturase 2 family. MatK subfamily.

It is found in the plastid. The protein localises to the chloroplast. Its function is as follows. Usually encoded in the trnK tRNA gene intron. Probably assists in splicing its own and other chloroplast group II introns. The sequence is that of Maturase K from Wolffiella gladiata (Florida mud-midget).